A 269-amino-acid polypeptide reads, in one-letter code: Diaminopimelate epimerase (269 aa).

Residues asparagine 15, glutamine 49, and asparagine 66 each coordinate substrate. Cysteine 75 acts as the Proton donor in catalysis. Residues 76–77 (GN), asparagine 155, asparagine 187, and 204–205 (ER) each bind substrate. Residue cysteine 213 is the Proton acceptor of the active site. Residue 214–215 (GS) participates in substrate binding.

The protein belongs to the diaminopimelate epimerase family. In terms of assembly, homodimer.

The protein localises to the cytoplasm. The enzyme catalyses (2S,6S)-2,6-diaminopimelate = meso-2,6-diaminopimelate. Its pathway is amino-acid biosynthesis; L-lysine biosynthesis via DAP pathway; DL-2,6-diaminopimelate from LL-2,6-diaminopimelate: step 1/1. Catalyzes the stereoinversion of LL-2,6-diaminopimelate (L,L-DAP) to meso-diaminopimelate (meso-DAP), a precursor of L-lysine and an essential component of the bacterial peptidoglycan. The protein is Diaminopimelate epimerase of Rickettsia bellii (strain OSU 85-389).